Here is a 357-residue protein sequence, read N- to C-terminus: Phospho-N-acetylmuramoyl-pentapeptide-transferase (357 aa).

The next 10 membrane-spanning stretches (helical) occupy residues 4–24 (QILF…PLLI), 52–72 (TMGG…SKVI), 77–97 (PTFS…VGFL), 115–135 (AKMA…LQFA), 153–173 (FGWT…ILAM), 186–206 (LATG…VWQF), 228–248 (PLDL…FLWW), 255–275 (IFMG…LAIC), 280–300 (LLVA…VIQV), and 334–354 (FWII…AGWA).

This sequence belongs to the glycosyltransferase 4 family. MraY subfamily. Mg(2+) is required as a cofactor.

Its subcellular location is the cell membrane. The enzyme catalyses UDP-N-acetyl-alpha-D-muramoyl-L-alanyl-gamma-D-glutamyl-meso-2,6-diaminopimeloyl-D-alanyl-D-alanine + di-trans,octa-cis-undecaprenyl phosphate = di-trans,octa-cis-undecaprenyl diphospho-N-acetyl-alpha-D-muramoyl-L-alanyl-D-glutamyl-meso-2,6-diaminopimeloyl-D-alanyl-D-alanine + UMP. It functions in the pathway cell wall biogenesis; peptidoglycan biosynthesis. Its function is as follows. Catalyzes the initial step of the lipid cycle reactions in the biosynthesis of the cell wall peptidoglycan: transfers peptidoglycan precursor phospho-MurNAc-pentapeptide from UDP-MurNAc-pentapeptide onto the lipid carrier undecaprenyl phosphate, yielding undecaprenyl-pyrophosphoryl-MurNAc-pentapeptide, known as lipid I. The chain is Phospho-N-acetylmuramoyl-pentapeptide-transferase from Streptomyces avermitilis (strain ATCC 31267 / DSM 46492 / JCM 5070 / NBRC 14893 / NCIMB 12804 / NRRL 8165 / MA-4680).